Consider the following 335-residue polypeptide: Glyceraldehyde-3-phosphate dehydrogenase (335 aa).

Residues 12–13 (RI), Asp34, Arg78, and Ser120 each bind NAD(+). Residues 151–153 (SCT) and Thr182 contribute to the D-glyceraldehyde 3-phosphate site. The active-site Nucleophile is the Cys152. Asn183 provides a ligand contact to NAD(+). Residues Arg197, 210–211 (TG), and Arg233 each bind D-glyceraldehyde 3-phosphate. NAD(+) is bound at residue Asn315.

This sequence belongs to the glyceraldehyde-3-phosphate dehydrogenase family. In terms of assembly, homotetramer.

It is found in the cytoplasm. It carries out the reaction D-glyceraldehyde 3-phosphate + phosphate + NAD(+) = (2R)-3-phospho-glyceroyl phosphate + NADH + H(+). It participates in carbohydrate degradation; glycolysis; pyruvate from D-glyceraldehyde 3-phosphate: step 1/5. Its function is as follows. Catalyzes the oxidative phosphorylation of glyceraldehyde 3-phosphate (G3P) to 1,3-bisphosphoglycerate (BPG) using the cofactor NAD. The first reaction step involves the formation of a hemiacetal intermediate between G3P and a cysteine residue, and this hemiacetal intermediate is then oxidized to a thioester, with concomitant reduction of NAD to NADH. The reduced NADH is then exchanged with the second NAD, and the thioester is attacked by a nucleophilic inorganic phosphate to produce BPG. The polypeptide is Glyceraldehyde-3-phosphate dehydrogenase (gap) (Geobacillus stearothermophilus (Bacillus stearothermophilus)).